An 817-amino-acid chain; its full sequence is Tax1-binding protein 1 homolog (817 aa).

Phosphoserine is present on residues Ser-124 and Ser-138. A coiled-coil region spans residues 144–628; the sequence is TTKAGLLELK…ENQAERKLEG (485 aa). The segment at 320 to 420 is oligomerization; that stretch reads EEISRLQFSL…ELKLSAVNKD (101 aa). The span at 609–627 shows a compositional bias: basic and acidic residues; the sequence is SREKEHKRSVENQAERKLE. A disordered region spans residues 609–685; the sequence is SREKEHKRSV…ADGAFYPDEI (77 aa). Ser-617 carries the post-translational modification Phosphoserine; by IKKA. The segment covering 628-643 has biased composition (polar residues); the sequence is GQNSQSPHQISQCLKT. The residue at position 633 (Ser-633) is a Phosphoserine. Ser-694 bears the Phosphoserine; by IKKA mark. The segment at 704-742 is disordered; sequence SQPARNLSRPDGLEDPEDSKEDEKVPTAPDPPSQHLRGH. 2 UBZ1-type zinc fingers span residues 755–781 and 782–808; these read QKKCPLCELMFPPNYDQSKFEEHVESH and WKVCPMCSEQFPPDYDQQVFERHVQTH. Zn(2+)-binding residues include Cys-758, Cys-761, His-777, His-781, Cys-785, Cys-788, His-804, and His-808.

In terms of assembly, homooligomer. Interacts with TNFAIP3. Interacts with STARD13. Interacts with MYO6. Interacts with TOM1; the interaction is indirect and is mediated by MYO6, which acts as a bridge between TOM1 and TAX1BP1. Interacts with MAVS; this interaction induces MAVS polyubiquitination. Interacts with TNIP1. Interacts with TRAF6; this interaction mediates deubiquitination of TRAF6 and inhibition of NF-kappa-B activation. Interacts with RIPK1; this interaction negatively regulates RIPK1 ubiquitination. Interacts with NBR1. Interacts with TBK1. Interacts with RB1CC1. Interacts with SQSTM1. Interacts with AZI2. In terms of processing, phosphorylated in the C-terminal region by CHUK/IKKA leading to NF-kappa-B signaling down-regulation.

Its subcellular location is the cytoplasm. The protein localises to the mitochondrion. It localises to the preautophagosomal structure. The protein resides in the cytoplasmic vesicle. It is found in the autophagosome. Its function is as follows. Ubiquitin-binding adapter that participates in inflammatory, antiviral and innate immune processes as well as selective autophagy regulation. Plays a key role in the negative regulation of NF-kappa-B and IRF3 signalings by acting as an adapter for the ubiquitin-editing enzyme A20/TNFAIP3 to bind and inactivate its substrates. Disrupts the interactions between the E3 ubiquitin ligase TRAF3 and TBK1/IKBKE to attenuate 'Lys63'-linked polyubiquitination of TBK1 and thereby IFN-beta production. Also recruits A20/TNFAIP3 to ubiquitinated signaling proteins TRAF6 and RIPK1, leading to their deubiquitination and disruption of IL-1 and TNF-induced NF-kappa-B signaling pathways. Inhibits virus-induced apoptosis by inducing the 'Lys-48'-linked polyubiquitination and degradation of MAVS via recruitment of the E3 ligase ITCH, thereby attenuating MAVS-mediated apoptosis signaling. As a macroautophagy/autophagy receptor, facilitates the xenophagic clearance of pathogenic bacteria such as Salmonella typhimurium and Mycobacterium tuberculosis. Upon NBR1 recruitment to the SQSTM1-ubiquitin condensates, acts as the major recruiter of RB1CC1 to these ubiquitin condensates to promote their autophagic degradation. This is Tax1-binding protein 1 homolog (TAX1BP1) from Bos taurus (Bovine).